The sequence spans 206 residues: Uridine kinase (206 aa).

11 to 18 (GGTGSGKS) lines the ATP pocket.

Belongs to the uridine kinase family.

Its subcellular location is the cytoplasm. The enzyme catalyses uridine + ATP = UMP + ADP + H(+). It carries out the reaction cytidine + ATP = CMP + ADP + H(+). The protein operates within pyrimidine metabolism; CTP biosynthesis via salvage pathway; CTP from cytidine: step 1/3. It participates in pyrimidine metabolism; UMP biosynthesis via salvage pathway; UMP from uridine: step 1/1. In Clostridium botulinum (strain Okra / Type B1), this protein is Uridine kinase.